We begin with the raw amino-acid sequence, 122 residues long: Large ribosomal subunit protein uL14 (122 aa).

Belongs to the universal ribosomal protein uL14 family. In terms of assembly, part of the 50S ribosomal subunit. Forms a cluster with proteins L3 and L19. In the 70S ribosome, L14 and L19 interact and together make contacts with the 16S rRNA in bridges B5 and B8.

Functionally, binds to 23S rRNA. Forms part of two intersubunit bridges in the 70S ribosome. This chain is Large ribosomal subunit protein uL14, found in Lacticaseibacillus casei (strain BL23) (Lactobacillus casei).